The sequence spans 100 residues: Urease subunit gamma (100 aa).

It belongs to the urease gamma subunit family. Heterotrimer of UreA (gamma), UreB (beta) and UreC (alpha) subunits. Three heterotrimers associate to form the active enzyme.

The protein resides in the cytoplasm. The catalysed reaction is urea + 2 H2O + H(+) = hydrogencarbonate + 2 NH4(+). It participates in nitrogen metabolism; urea degradation; CO(2) and NH(3) from urea (urease route): step 1/1. The chain is Urease subunit gamma from Roseobacter denitrificans (strain ATCC 33942 / OCh 114) (Erythrobacter sp. (strain OCh 114)).